The chain runs to 153 residues: Ribosomal RNA large subunit methyltransferase H (153 aa).

Residues Leu70, Gly102, and 121–126 (FSKMTF) contribute to the S-adenosyl-L-methionine site.

The protein belongs to the RNA methyltransferase RlmH family. Homodimer.

Its subcellular location is the cytoplasm. The catalysed reaction is pseudouridine(1915) in 23S rRNA + S-adenosyl-L-methionine = N(3)-methylpseudouridine(1915) in 23S rRNA + S-adenosyl-L-homocysteine + H(+). Specifically methylates the pseudouridine at position 1915 (m3Psi1915) in 23S rRNA. The sequence is that of Ribosomal RNA large subunit methyltransferase H from Desulfotalea psychrophila (strain LSv54 / DSM 12343).